The sequence spans 273 residues: ATP synthase subunit a (273 aa).

5 consecutive transmembrane segments (helical) span residues W44–Y64, I104–I124, D149–I169, L223–W243, and A244–V264.

The protein belongs to the ATPase A chain family. As to quaternary structure, F-type ATPases have 2 components, CF(1) - the catalytic core - and CF(0) - the membrane proton channel. CF(1) has five subunits: alpha(3), beta(3), gamma(1), delta(1), epsilon(1). CF(0) has three main subunits: a(1), b(2) and c(9-12). The alpha and beta chains form an alternating ring which encloses part of the gamma chain. CF(1) is attached to CF(0) by a central stalk formed by the gamma and epsilon chains, while a peripheral stalk is formed by the delta and b chains.

The protein localises to the cell inner membrane. Key component of the proton channel; it plays a direct role in the translocation of protons across the membrane. This Shewanella putrefaciens (strain CN-32 / ATCC BAA-453) protein is ATP synthase subunit a.